The primary structure comprises 303 residues: UDP-3-O-acyl-N-acetylglucosamine deacetylase (303 aa).

The Zn(2+) site is built by His-78, His-237, and Asp-241. Residue His-264 is the Proton donor of the active site.

The protein belongs to the LpxC family. The cofactor is Zn(2+).

The enzyme catalyses a UDP-3-O-[(3R)-3-hydroxyacyl]-N-acetyl-alpha-D-glucosamine + H2O = a UDP-3-O-[(3R)-3-hydroxyacyl]-alpha-D-glucosamine + acetate. It functions in the pathway glycolipid biosynthesis; lipid IV(A) biosynthesis; lipid IV(A) from (3R)-3-hydroxytetradecanoyl-[acyl-carrier-protein] and UDP-N-acetyl-alpha-D-glucosamine: step 2/6. In terms of biological role, catalyzes the hydrolysis of UDP-3-O-myristoyl-N-acetylglucosamine to form UDP-3-O-myristoylglucosamine and acetate, the committed step in lipid A biosynthesis. This Xanthomonas euvesicatoria pv. vesicatoria (strain 85-10) (Xanthomonas campestris pv. vesicatoria) protein is UDP-3-O-acyl-N-acetylglucosamine deacetylase.